A 146-amino-acid chain; its full sequence is Globin (146 aa).

Residue serine 1 is modified to N-acetylserine. One can recognise a Globin domain in the interval 1-146 (SLSGAEADLL…IIDALKKAGK (146 aa)). Residue histidine 95 participates in heme b binding.

The protein belongs to the globin family. As to quaternary structure, monomer.

This chain is Globin, found in Bursatella leachii (Ragged sea hare).